A 431-amino-acid polypeptide reads, in one-letter code: MARNMNILTLFAVLLGSASAVYHPPSWTAWIAPKPWTAWKVPPPAWTAWKAHPPAWTAWKATPKPWTAWKAPPPAWTAWKATPKPWTAWKAPPPTWTAWKATPKPWTAWKAPPPVWTAWKATPKPRTAWKAPPPTWTAWKAAPKPWTAWKATPKPWTAWKAPPPAWTAWKATPKPWTAWKATPKPWTAWKATPKPWTAWKATPKPWTVWKATPKPWTAWKAPPPAWTAWKATPKPWTAWKAPPPAWTAWKATPKPWTAWKAPPPAWTAWKATPKPWTAWKATPKPWTAWKATPKPWTAWKATPKPWTAWRATPPPTWTAWHGHGYGGYGKPGKPGKPGSKGPRGPAGPPGATGKTGRTGATGKRGPPGYPGKPGVPGRNGYVHIVFDGYGKWEIGKIERKNIREAVAKAWTAWNAGHGHGWTAWTAPPAYG.

A signal peptide spans 1-20 (MARNMNILTLFAVLLGSASA). 3',4'-dihydroxyphenylalanine is present on Y22. Residue P33 is modified to 4-hydroxyproline. The stretch at 41 to 50 (VPPPAWTAWK) is one A-1; approximate repeat. Residues 41–270 (VPPPAWTAWK…APPPAWTAWK (230 aa)) are 13 X 10 AA A-P-P-P-A-W-T-A-W-K. 7'-hydroxytryptophan occurs at positions 46, 49, 56, and 59. C-linked (Man) hydroxytryptophan glycans are attached at residues W46, W49, W56, and W59. The A-2; approximate repeat unit spans residues 51-60 (AHPPAWTAWK). Residues 61-70 (ATPKPWTAWK) form a B-1 repeat. Residues 61–310 (ATPKPWTAWK…ATPKPWTAWR (250 aa)) are 27 X 10 AA A-T-P-K-P-W-T-A-W-K. P65 carries the post-translational modification 4-hydroxyproline. C-linked (Man) tryptophan glycosylation is present at W66. W69 carries the 7'-hydroxytryptophan modification. C-linked (Man) hydroxytryptophan glycosylation is present at W69. Residues 71–80 (APPPAWTAWK) form an A-3 repeat. A 4-hydroxyproline mark is found at P72, P73, and P74. W76 and W79 each carry 7'-hydroxytryptophan. W76 and W79 each carry a C-linked (Man) hydroxytryptophan glycan. A B-2 repeat occupies 81 to 90 (ATPKPWTAWK). P85 carries the post-translational modification 4-hydroxyproline. The C-linked (Man) tryptophan glycan is linked to W86. W89 carries the 7'-hydroxytryptophan modification. A C-linked (Man) hydroxytryptophan glycan is attached at W89. One copy of the A-4; approximate repeat lies at 91-100 (APPPTWTAWK). 3 positions are modified to 4-hydroxyproline: P92, P93, and P94. Residues W96 and W99 each carry the 7'-hydroxytryptophan modification. C-linked (Man) hydroxytryptophan glycosylation is found at W96 and W99. The stretch at 101–110 (ATPKPWTAWK) is one B-3 repeat. Position 105 is a 4-hydroxyproline (P105). Residue W106 is glycosylated (C-linked (Man) tryptophan). Position 109 is a 7'-hydroxytryptophan (W109). A glycan (C-linked (Man) hydroxytryptophan) is linked at W109. The A-5; approximate repeat unit spans residues 111–120 (APPPVWTAWK). 3 positions are modified to 4-hydroxyproline: P112, P113, and P114. 7'-hydroxytryptophan occurs at positions 116 and 119. C-linked (Man) hydroxytryptophan glycosylation is found at W116 and W119. A B-4; approximate repeat occupies 121–130 (ATPKPRTAWK). Residue P125 is modified to 4-hydroxyproline. Position 129 is a 7'-hydroxytryptophan (W129). C-linked (Man) hydroxytryptophan glycosylation occurs at W129. One copy of the A-6; approximate repeat lies at 131 to 140 (APPPTWTAWK). 4-hydroxyproline is present on residues P132, P133, and P134. 2 positions are modified to 7'-hydroxytryptophan: W136 and W139. W136 and W139 each carry a C-linked (Man) hydroxytryptophan glycan. The B-5; approximate repeat unit spans residues 141–150 (AAPKPWTAWK). Position 145 is a 4-hydroxyproline (P145). A C-linked (Man) tryptophan glycan is attached at W146. W149 is subject to 7'-hydroxytryptophan. C-linked (Man) hydroxytryptophan glycosylation is present at W149. One copy of the B-6 repeat lies at 151–160 (ATPKPWTAWK). P155 carries the 4-hydroxyproline modification. A glycan (C-linked (Man) tryptophan) is linked at W156. W159 carries the post-translational modification 7'-hydroxytryptophan. W159 carries C-linked (Man) hydroxytryptophan glycosylation. One copy of the A-7 repeat lies at 161 to 170 (APPPAWTAWK). Residues P162, P163, and P164 each carry the 4-hydroxyproline modification. 7'-hydroxytryptophan occurs at positions 166 and 169. C-linked (Man) hydroxytryptophan glycosylation is found at W166 and W169. The stretch at 171–180 (ATPKPWTAWK) is one B-7 repeat. P175 bears the 4-hydroxyproline mark. C-linked (Man) tryptophan glycosylation occurs at W176. 7'-hydroxytryptophan is present on W179. C-linked (Man) hydroxytryptophan glycosylation is present at W179. Residues 181-190 (ATPKPWTAWK) form a B-8 repeat. At P185 the chain carries 4-hydroxyproline. C-linked (Man) tryptophan glycosylation occurs at W186. Position 189 is a 7'-hydroxytryptophan (W189). A glycan (C-linked (Man) hydroxytryptophan) is linked at W189. The B-9 repeat unit spans residues 191–200 (ATPKPWTAWK). P195 bears the 4-hydroxyproline mark. Residue W196 is glycosylated (C-linked (Man) tryptophan). At W199 the chain carries 7'-hydroxytryptophan. W199 is a glycosylation site (C-linked (Man) hydroxytryptophan). The stretch at 201–210 (ATPKPWTVWK) is one B-10; approximate repeat. 4-hydroxyproline is present on P205. A C-linked (Man) tryptophan glycan is attached at W206. 7'-hydroxytryptophan is present on W209. Residue W209 is glycosylated (C-linked (Man) hydroxytryptophan). The stretch at 211-220 (ATPKPWTAWK) is one B-11 repeat. Position 215 is a 4-hydroxyproline (P215). W216 carries C-linked (Man) tryptophan glycosylation. Residue W219 is modified to 7'-hydroxytryptophan. Residue W219 is glycosylated (C-linked (Man) hydroxytryptophan). An A-8 repeat occupies 221–230 (APPPAWTAWK). Residues P222, P223, and P224 each carry the 4-hydroxyproline modification. 7'-hydroxytryptophan occurs at positions 226 and 229. C-linked (Man) hydroxytryptophan glycans are attached at residues W226 and W229. A B-12 repeat occupies 231 to 240 (ATPKPWTAWK). P235 carries the post-translational modification 4-hydroxyproline. The C-linked (Man) tryptophan glycan is linked to W236. W239 is subject to 7'-hydroxytryptophan. The C-linked (Man) hydroxytryptophan glycan is linked to W239. One copy of the A-9 repeat lies at 241–250 (APPPAWTAWK). 4-hydroxyproline occurs at positions 242, 243, and 244. 2 positions are modified to 7'-hydroxytryptophan: W246 and W249. C-linked (Man) hydroxytryptophan glycans are attached at residues W246 and W249. The stretch at 251 to 260 (ATPKPWTAWK) is one B-13 repeat. Position 255 is a 4-hydroxyproline (P255). A glycan (C-linked (Man) tryptophan) is linked at W256. W259 carries the 7'-hydroxytryptophan modification. C-linked (Man) hydroxytryptophan glycosylation is present at W259. An A-10 repeat occupies 261–270 (APPPAWTAWK). A 4-hydroxyproline mark is found at P262, P263, and P264. 7'-hydroxytryptophan occurs at positions 266 and 269. 2 C-linked (Man) hydroxytryptophan glycosylation sites follow: W266 and W269. One copy of the B-14 repeat lies at 271-280 (ATPKPWTAWK). P275 is subject to 4-hydroxyproline. C-linked (Man) tryptophan glycosylation is present at W276. W279 carries the post-translational modification 7'-hydroxytryptophan. A C-linked (Man) hydroxytryptophan glycan is attached at W279. The B-15 repeat unit spans residues 281–290 (ATPKPWTAWK). P285 is modified (4-hydroxyproline). The C-linked (Man) tryptophan glycan is linked to W286. W289 is modified (7'-hydroxytryptophan). Residue W289 is glycosylated (C-linked (Man) hydroxytryptophan). One copy of the B-16 repeat lies at 291-300 (ATPKPWTAWK). P295 carries the 4-hydroxyproline modification. The C-linked (Man) tryptophan glycan is linked to W296. W299 is modified (7'-hydroxytryptophan). A C-linked (Man) hydroxytryptophan glycan is attached at W299. One copy of the B-17; approximate repeat lies at 301–310 (ATPKPWTAWR). P305 is subject to 4-hydroxyproline. A C-linked (Man) tryptophan glycan is attached at W306. At W309 the chain carries 7'-hydroxytryptophan. A C-linked (Man) hydroxytryptophan glycan is attached at W309. Positions 322–377 (GHGYGGYGKPGKPGKPGSKGPRGPAGPPGATGKTGRTGATGKRGPPGYPGKPGVPG) are disordered. The segment covering 323-332 (HGYGGYGKPG) has biased composition (gly residues). One can recognise a Collagen-like domain in the interval 329 to 380 (GKPGKPGKPGSKGPRGPAGPPGATGKTGRTGATGKRGPPGYPGKPGVPGRNG). The segment covering 336–366 (KPGSKGPRGPAGPPGATGKTGRTGATGKRGP) has biased composition (low complexity). P367, P370, and P376 each carry 4-hydroxyproline.

In terms of tissue distribution, produced by the byssal gland.

It is found in the secreted. Its function is as follows. Provides adhesiveness to the mussel's foot. Mussels produce one of the strongest water insoluble glues. The mussel's adhesive is a bundle of threads, called a byssus, formed by a fibrous collagenous core coated with adhesive proteins. This is Foot protein 1 variant 2 from Perna viridis (Asian green mussel).